The sequence spans 193 residues: Ion-translocating oxidoreductase complex subunit A (193 aa).

Helical transmembrane passes span 5-25, 47-67, 72-92, 102-122, 134-154, and 171-191; these read LLLF…FLGL, FVMT…LIPL, LRTM…EMVV, LLGI…VALL, ALYG…FAAI, and AIAL…SGLV.

Belongs to the NqrDE/RnfAE family. In terms of assembly, the complex is composed of six subunits: RsxA, RsxB, RsxC, RsxD, RsxE and RsxG.

It localises to the cell inner membrane. Part of a membrane-bound complex that couples electron transfer with translocation of ions across the membrane. Required to maintain the reduced state of SoxR. The sequence is that of Ion-translocating oxidoreductase complex subunit A from Escherichia coli O45:K1 (strain S88 / ExPEC).